The following is a 308-amino-acid chain: D-alanine--D-alanine ligase (308 aa).

One can recognise an ATP-grasp domain in the interval 105-302; it reads KAIFRSLGLA…FPDLCERILD (198 aa). Residue 133–188 coordinates ATP; sequence DLPFGLPCVVKPAGEGSSVGVHLVNEAAELGPACRDAASHAGDVIVERYVKGTEVD. Mg(2+)-binding residues include Asp256, Glu269, and Asn271.

It belongs to the D-alanine--D-alanine ligase family. The cofactor is Mg(2+). Mn(2+) serves as cofactor.

The protein resides in the cytoplasm. The catalysed reaction is 2 D-alanine + ATP = D-alanyl-D-alanine + ADP + phosphate + H(+). It functions in the pathway cell wall biogenesis; peptidoglycan biosynthesis. In terms of biological role, cell wall formation. This Anaeromyxobacter dehalogenans (strain 2CP-1 / ATCC BAA-258) protein is D-alanine--D-alanine ligase.